The sequence spans 184 residues: Ferredoxin-thioredoxin reductase subunit A2, chloroplastic (184 aa).

Residues M1–R71 constitute a chloroplast transit peptide.

It belongs to the ferredoxin thioredoxin reductase alpha subunit family. Heterodimer of subunit A (variable subunit) and subunit B (catalytic subunit). Heterodimeric FTR forms a complex with ferredoxin and thioredoxin.

Its subcellular location is the plastid. It is found in the chloroplast. Its function is as follows. Variable subunit of the ferredoxin-thioredoxin reductase (FTR), which catalyzes the two-electron reduction of thioredoxins by the electrons provided by reduced ferredoxin. The sequence is that of Ferredoxin-thioredoxin reductase subunit A2, chloroplastic from Arabidopsis thaliana (Mouse-ear cress).